Consider the following 338-residue polypeptide: Anthranilate phosphoribosyltransferase (338 aa).

5-phospho-alpha-D-ribose 1-diphosphate is bound by residues G81, 84–85 (GD), T89, 91–94 (NIST), 109–117 (KHGNRAQSS), and T121. Anthranilate is bound at residue G81. S93 is a binding site for Mg(2+). N112 provides a ligand contact to anthranilate. R167 is a binding site for anthranilate. Mg(2+)-binding residues include D225 and E226.

This sequence belongs to the anthranilate phosphoribosyltransferase family. Homodimer. Requires Mg(2+) as cofactor.

It catalyses the reaction N-(5-phospho-beta-D-ribosyl)anthranilate + diphosphate = 5-phospho-alpha-D-ribose 1-diphosphate + anthranilate. It participates in amino-acid biosynthesis; L-tryptophan biosynthesis; L-tryptophan from chorismate: step 2/5. Functionally, catalyzes the transfer of the phosphoribosyl group of 5-phosphorylribose-1-pyrophosphate (PRPP) to anthranilate to yield N-(5'-phosphoribosyl)-anthranilate (PRA). This Rhizobium rhizogenes (strain K84 / ATCC BAA-868) (Agrobacterium radiobacter) protein is Anthranilate phosphoribosyltransferase.